The chain runs to 175 residues: MGKSLADKQELVAEIKDLLKDAQLTFVIDYKGLTVAEITDLRNRLRPAGAYCKIAKNTLMHIAVDGDETWQPVQSLLKDSSAFLIAGEDVASAVKAYKEFRKATKKTELRGGVMEGQALTSDQIEALGDLPTKDQLYGQIAGAINAVTAKIAIGINEVPGSLARAIKAVSEKEAA.

It belongs to the universal ribosomal protein uL10 family. Part of the ribosomal stalk of the 50S ribosomal subunit. The N-terminus interacts with L11 and the large rRNA to form the base of the stalk. The C-terminus forms an elongated spine to which L12 dimers bind in a sequential fashion forming a multimeric L10(L12)X complex.

Its function is as follows. Forms part of the ribosomal stalk, playing a central role in the interaction of the ribosome with GTP-bound translation factors. This chain is Large ribosomal subunit protein uL10, found in Picosynechococcus sp. (strain ATCC 27264 / PCC 7002 / PR-6) (Agmenellum quadruplicatum).